The chain runs to 335 residues: Cholinephosphotransferase 1 (335 aa).

Transmembrane regions (helical) follow at residues 53 to 73 (PNAI…PLIA) and 84 to 108 (FWAY…GKQA). Asn54 is a binding site for CDP-choline. 2 residues coordinate Mg(2+): Asp101 and Asp104. Arg109 provides a ligand contact to CDP-choline. 6 helical membrane-spanning segments follow: residues 116–140 (PLGE…SCIA), 151–169 (FFCC…WQTY), 181–197 (VTEV…VSAF), 213–238 (ELKF…RIIF), 267–276 (IGPGLLFLDQ), and 284–313 (EYVV…IAAH). Mg(2+) is bound at residue Asp122. The active-site Proton acceptor is His123. Asp126 contacts Mg(2+).

Belongs to the CDP-alcohol phosphatidyltransferase class-I family. The cofactor is Mg(2+). Requires Mn(2+) as cofactor.

It localises to the golgi apparatus membrane. It carries out the reaction CDP-choline + a 1,2-diacyl-sn-glycerol = a 1,2-diacyl-sn-glycero-3-phosphocholine + CMP + H(+). The enzyme catalyses 1-octadecanoyl-2-(5Z,8Z,11Z,14Z-eicosatetraenoyl)-sn-glycerol + CDP-choline = 1-octadecanoyl-2-(5Z,8Z,11Z,14Z-eicosatetraenoyl)-sn-glycero-3-phosphocholine + CMP + H(+). It catalyses the reaction 1-hexadecanoyl-2-(9Z-octadecenoyl)-sn-glycerol + CDP-choline = 1-hexadecanoyl-2-(9Z-octadecenoyl)-sn-glycero-3-phosphocholine + CMP + H(+). The catalysed reaction is 1-hexadecanoyl-2-(4Z,7Z,10Z,13Z,16Z,19Z-docosahexaenoyl)-sn-glycerol + CDP-choline = 1-hexadecanoyl-2-(4Z,7Z,10Z,13Z,16Z,19Z-docosahexaenoyl)-sn-glycero-3-phosphocholine + CMP + H(+). It carries out the reaction 1,2-dioctanoyl-sn-glycerol + CDP-choline = 1,2-dioctanoyl-sn-glycero-3-phosphocholine + CMP + H(+). It participates in phospholipid metabolism; phosphatidylcholine biosynthesis; phosphatidylcholine from phosphocholine: step 2/2. Catalyzes the final step of de novo phosphatidylcholine (PC) synthesis, i.e. the transfer of choline phosphate from CDP-choline to the free hydroxyl of a diacylglycerol (DAG), producing a PC. It thereby plays a central role in the formation and maintenance of vesicular membranes. The protein is Cholinephosphotransferase 1 (CHPT1) of Gallus gallus (Chicken).